A 457-amino-acid polypeptide reads, in one-letter code: Multidrug resistance protein MdtK (457 aa).

The next 12 helical transmembrane spans lie at 11 to 31, 53 to 73, 93 to 113, 127 to 147, 160 to 180, 188 to 208, 243 to 263, 276 to 296, 314 to 334, 350 to 370, 387 to 407, and 418 to 438; these read LLALAIPVILAQVAQTAMGFV, IWLPAILFGHGLLLALTPVIA, WLAGFVSVLVMIVLWNAGYII, AVGYLRALLWGAPGYLFFQVA, GMVMGFLGLLVNIPVNYIFIY, LGGIGCGVATAAVYWVMFIAM, LPIALALFFEVTLFAVVALLV, IALNFSSLMFVLPMSLAAAVT, AARTGLGVGICMAVVTAIFTV, VVALAAQLMLLAAVYQISDSI, IFFITFTAYWVLGLPSGYILA, and PAGFWMGFIIGLTSAAVLMML.

It belongs to the multi antimicrobial extrusion (MATE) (TC 2.A.66.1) family. MdtK subfamily.

The protein resides in the cell inner membrane. Its function is as follows. Multidrug efflux pump that functions probably as a Na(+)/drug antiporter. This is Multidrug resistance protein MdtK from Salmonella heidelberg (strain SL476).